The following is a 392-amino-acid chain: Elongation factor Tu (392 aa).

Positions Lys10–Ile202 constitute a tr-type G domain. The G1 stretch occupies residues Gly19–Thr26. Residue Gly19 to Thr26 coordinates GTP. Thr26 lines the Mg(2+) pocket. The interval Gly60–Asn64 is G2. The tract at residues Asp81–Gly84 is G3. Residues Asp81–His85 and Asn136–Asp139 contribute to the GTP site. The tract at residues Asn136–Asp139 is G4. The interval Ser174–Leu176 is G5.

Belongs to the TRAFAC class translation factor GTPase superfamily. Classic translation factor GTPase family. EF-Tu/EF-1A subfamily. In terms of assembly, monomer.

The protein localises to the cytoplasm. The enzyme catalyses GTP + H2O = GDP + phosphate + H(+). Functionally, GTP hydrolase that promotes the GTP-dependent binding of aminoacyl-tRNA to the A-site of ribosomes during protein biosynthesis. This is Elongation factor Tu from Apple proliferation phytoplasma.